The chain runs to 504 residues: Histidine--tRNA ligase (504 aa).

This sequence belongs to the class-II aminoacyl-tRNA synthetase family. As to quaternary structure, homodimer.

It localises to the cytoplasm. It carries out the reaction tRNA(His) + L-histidine + ATP = L-histidyl-tRNA(His) + AMP + diphosphate + H(+). In Rhizobium rhizogenes (strain K84 / ATCC BAA-868) (Agrobacterium radiobacter), this protein is Histidine--tRNA ligase.